The following is a 432-amino-acid chain: Enolase (432 aa).

Q167 provides a ligand contact to (2R)-2-phosphoglycerate. E209 (proton donor) is an active-site residue. Mg(2+) is bound by residues D246, E290, and D317. 4 residues coordinate (2R)-2-phosphoglycerate: K342, R371, S372, and K393. K342 functions as the Proton acceptor in the catalytic mechanism.

The protein belongs to the enolase family. Component of the RNA degradosome, a multiprotein complex involved in RNA processing and mRNA degradation. Mg(2+) serves as cofactor.

It is found in the cytoplasm. It localises to the secreted. The protein resides in the cell surface. The catalysed reaction is (2R)-2-phosphoglycerate = phosphoenolpyruvate + H2O. The protein operates within carbohydrate degradation; glycolysis; pyruvate from D-glyceraldehyde 3-phosphate: step 4/5. Its function is as follows. Catalyzes the reversible conversion of 2-phosphoglycerate (2-PG) into phosphoenolpyruvate (PEP). It is essential for the degradation of carbohydrates via glycolysis. This chain is Enolase, found in Escherichia coli O139:H28 (strain E24377A / ETEC).